The chain runs to 253 residues: Peptidase inhibitor R3HDML (253 aa).

A signal peptide spans 1 to 24; sequence MPLLPSTVGLAGLLFWAGQAVNAL. Positions 25–56 are excised as a propeptide; sequence IMPNATPAPAQPESTAMRLLSGLEVPRYRRKR. The 141-residue stretch at 67–207 folds into the SCP domain; it reads LDYHNHIRAS…HRAAYLVCNY (141 aa). The N-linked (GlcNAc...) asparagine glycan is linked to Asn120.

Belongs to the CRISP family.

The protein resides in the secreted. Its function is as follows. Putative serine protease inhibitor. The chain is Peptidase inhibitor R3HDML (R3HDML) from Homo sapiens (Human).